A 416-amino-acid chain; its full sequence is Peptide chain release factor subunit 1 (416 aa).

This sequence belongs to the eukaryotic release factor 1 family. Heterodimer of two subunits, one of which binds GTP.

Its subcellular location is the cytoplasm. Functionally, directs the termination of nascent peptide synthesis (translation) in response to the termination codons UAA, UAG and UGA. The sequence is that of Peptide chain release factor subunit 1 from Halorubrum lacusprofundi (strain ATCC 49239 / DSM 5036 / JCM 8891 / ACAM 34).